Reading from the N-terminus, the 187-residue chain is Elongation factor P (187 aa).

K34 carries the N6-(3,6-diaminohexanoyl)-5-hydroxylysine modification.

Belongs to the elongation factor P family. May be beta-lysylated on the epsilon-amino group of Lys-34 by the combined action of EpmA and EpmB, and then hydroxylated on the C5 position of the same residue by EpmC (if this protein is present). Lysylation is critical for the stimulatory effect of EF-P on peptide-bond formation. The lysylation moiety may extend toward the peptidyltransferase center and stabilize the terminal 3-CCA end of the tRNA. Hydroxylation of the C5 position on Lys-34 may allow additional potential stabilizing hydrogen-bond interactions with the P-tRNA.

The protein localises to the cytoplasm. It functions in the pathway protein biosynthesis; polypeptide chain elongation. Its function is as follows. Involved in peptide bond synthesis. Alleviates ribosome stalling that occurs when 3 or more consecutive Pro residues or the sequence PPG is present in a protein, possibly by augmenting the peptidyl transferase activity of the ribosome. Modification of Lys-34 is required for alleviation. The sequence is that of Elongation factor P from Thioalkalivibrio sulfidiphilus (strain HL-EbGR7).